A 300-amino-acid polypeptide reads, in one-letter code: Mitochondrial carnitine/acylcarnitine carrier-like protein (300 aa).

Solcar repeat units lie at residues 2–93, 102–201, and 211–298; these read ADAW…MEGL, LTIS…FKRF, and LGQG…TRSS. Transmembrane regions (helical) follow at residues 8 to 28, 64 to 84, 108 to 128, 176 to 195, 211 to 231, and 273 to 292; these read LASG…FDTI, GLYK…AVLF, FVAG…TELI, GLFP…FAAY, LGQG…WGIV, and GFGP…FLAY.

Belongs to the mitochondrial carrier (TC 2.A.29) family. As to expression, high expression in cotyledons, leaves, flowers and developing siliques. Lower expression in roots and maturing siliques. Not detected in meristematic tissues.

The protein resides in the mitochondrion inner membrane. Involved in photorespiratory metabolism. Acts probably as a carrier for a glycine decarboxylase (GDC) cofactor or, alternatively, may act as a mitochondrial glycine shuttle. Involved in the transition from the embryonic stage to the juvenile autotrophic stage. The polypeptide is Mitochondrial carnitine/acylcarnitine carrier-like protein (BOU) (Arabidopsis thaliana (Mouse-ear cress)).